A 124-amino-acid polypeptide reads, in one-letter code: Fluoride-specific ion channel FluC (124 aa).

Helical transmembrane passes span 1–21 (MLNTLVVFLGAGLGGALRYGV), 36–56 (TMIINVSGSLAMGILAGWFVV), 70–90 (TGILGGFTTFSTFSLEAFLLI), and 100–120 (LYVIGSVAAGIAGVAVSFAII). Na(+)-binding residues include G74 and T77.

It belongs to the fluoride channel Fluc/FEX (TC 1.A.43) family.

It localises to the cell inner membrane. The catalysed reaction is fluoride(in) = fluoride(out). Na(+) is not transported, but it plays an essential structural role and its presence is essential for fluoride channel function. Functionally, fluoride-specific ion channel. Important for reducing fluoride concentration in the cell, thus reducing its toxicity. The polypeptide is Fluoride-specific ion channel FluC (Methylobacterium sp. (strain 4-46)).